We begin with the raw amino-acid sequence, 313 residues long: E3 ubiquitin-protein ligase siah2 (313 aa).

The segment at Met-1 to Ala-49 is disordered. Positions Gln-20–Pro-29 are enriched in pro residues. The segment at Cys-69–Arg-104 adopts an RING-type zinc-finger fold. An SBD region spans residues Val-119–Cys-311. The SIAH-type zinc finger occupies Ala-122–Lys-182. The Zn(2+) site is built by Cys-127, Cys-134, His-146, Cys-150, Cys-157, Cys-164, His-176, and His-181.

Belongs to the SINA (Seven in absentia) family. Homodimer. As to expression, widely expressed in early embryos until stage 40. It is then expressed in brain, spinal cord and in the developing and mature eye.

It localises to the cytoplasm. It carries out the reaction S-ubiquitinyl-[E2 ubiquitin-conjugating enzyme]-L-cysteine + [acceptor protein]-L-lysine = [E2 ubiquitin-conjugating enzyme]-L-cysteine + N(6)-ubiquitinyl-[acceptor protein]-L-lysine.. It participates in protein modification; protein ubiquitination. In terms of biological role, E3 ubiquitin-protein ligase that mediates ubiquitination and subsequent proteasomal degradation of target proteins. E3 ubiquitin ligases accept ubiquitin from an E2 ubiquitin-conjugating enzyme in the form of a thioester and then directly transfers the ubiquitin to targeted substrates. Involved in eye morphogenesis, probably triggers the ubiquitin-mediated degradation of different substrates. May play a role in the regulation of the cellular clock function. The sequence is that of E3 ubiquitin-protein ligase siah2 (siah2) from Xenopus laevis (African clawed frog).